The sequence spans 209 residues: Uracil phosphoribosyltransferase (209 aa).

5-phospho-alpha-D-ribose 1-diphosphate contacts are provided by residues R79, R104, and D131 to S139. Uracil is bound by residues I194 and G199–A201. A 5-phospho-alpha-D-ribose 1-diphosphate-binding site is contributed by D200.

It belongs to the UPRTase family. Mg(2+) serves as cofactor.

The enzyme catalyses UMP + diphosphate = 5-phospho-alpha-D-ribose 1-diphosphate + uracil. It functions in the pathway pyrimidine metabolism; UMP biosynthesis via salvage pathway; UMP from uracil: step 1/1. Its activity is regulated as follows. Allosterically activated by GTP. Functionally, catalyzes the conversion of uracil and 5-phospho-alpha-D-ribose 1-diphosphate (PRPP) to UMP and diphosphate. The polypeptide is Uracil phosphoribosyltransferase (Streptococcus suis (strain 05ZYH33)).